A 318-amino-acid polypeptide reads, in one-letter code: Protoheme IX farnesyltransferase (318 aa).

The next 9 helical transmembrane spans lie at 33-53 (VMSLVVFTALVGLVAAPVSVH), 54-74 (PFIGFCAILFIAIGGGASGAL), 102-122 (GEALALGLGLSGLSVMMLALA), 125-145 (VLAGAFLAFTIFFYVVVYTMW), 154-174 (IVIGGAAGAFPPVIGWIAATG), 181-201 (WLMFALTFMWTPPHFWALALF), 225-245 (VHILIYTILLALLALGTAFSN), 246-266 (IGGPIYLAVALVLNALFLLGA), and 288-308 (FFKLSLLYLFLHFGAILAEAL).

This sequence belongs to the UbiA prenyltransferase family. Protoheme IX farnesyltransferase subfamily. Interacts with CtaA.

The protein localises to the cell inner membrane. The catalysed reaction is heme b + (2E,6E)-farnesyl diphosphate + H2O = Fe(II)-heme o + diphosphate. Its pathway is porphyrin-containing compound metabolism; heme O biosynthesis; heme O from protoheme: step 1/1. Functionally, converts heme B (protoheme IX) to heme O by substitution of the vinyl group on carbon 2 of heme B porphyrin ring with a hydroxyethyl farnesyl side group. The polypeptide is Protoheme IX farnesyltransferase (Ruegeria pomeroyi (strain ATCC 700808 / DSM 15171 / DSS-3) (Silicibacter pomeroyi)).